We begin with the raw amino-acid sequence, 105 residues long: Small ribosomal subunit protein uS10 (105 aa).

Belongs to the universal ribosomal protein uS10 family. As to quaternary structure, part of the 30S ribosomal subunit.

In terms of biological role, involved in the binding of tRNA to the ribosomes. The polypeptide is Small ribosomal subunit protein uS10 (Anaplasma phagocytophilum (strain HZ)).